A 330-amino-acid polypeptide reads, in one-letter code: MDPSTLLLFVIIAAGLIVLSIFFTFVPVMLWISALAAGVRVSIFTLVGMRLRRVIPNRVVNPLIKAHKAGLDVTINQLESHYLAGGNVDRVVNALIAAQRANIELNFARCAAIDLAGRDVLEAVQMSVNPKVIETPFISGVAMDGIEVKAKARITVRANIERLVGGAGEETIIARVGEGIVSTIGSSNNHKRVLENPDMISQTVLGKGLDSGTAFEILSIDIADVDIGKNIGAILQTDQAEADKNIAQAKAEERRAMAVAQEQEMRAKVEEMRAKVVEAEAEVPLAMAEALREGNIGVMDYMNIKNIDADTDMRDSFGKMTKGPSDNENK.

Helical transmembrane passes span 6-26 (LLLFVIIAAGLIVLSIFFTFV) and 28-48 (VMLWISALAAGVRVSIFTLVG).

This sequence belongs to the flotillin-like FloA family. In terms of assembly, homooligomerizes.

The protein localises to the cell membrane. The protein resides in the membrane raft. In terms of biological role, found in functional membrane microdomains (FMM) that may be equivalent to eukaryotic membrane rafts. FMMs are highly dynamic and increase in number as cells age. Flotillins are thought to be important factors in membrane fluidity. This chain is Flotillin-like protein FloA, found in Bacillus pumilus (strain SAFR-032).